Consider the following 621-residue polypeptide: Probable bifunctional dTTP/UTP pyrophosphatase/methyltransferase protein (621 aa).

The tract at residues 11–223 (LHKRVVLASA…PPRPEDLRRS (213 aa)) is MAF-like. S21 bears the Phosphoserine mark. The active-site Proton acceptor; for pyrophosphatase activity is the D88. Position 228 is a phosphoserine (S228). The residue at position 234 (T234) is a Phosphothreonine. The disordered stretch occupies residues 235–279 (FEDLSDVEGGGSEPTQRDAGSRDEKAEAGEAGQATAEAECHRTRE). S239 is subject to Phosphoserine. Positions 249-262 (TQRDAGSRDEKAEA) are enriched in basic and acidic residues. Residues 277–621 (TRETLPPFPT…DAILATKVAP (345 aa)) are ASMT-like. S421 is modified (phosphoserine). S-adenosyl-L-methionine-binding positions include D482, 508-510 (GDF), and R525.

In the N-terminal section; belongs to the Maf family. YhdE subfamily. The protein in the C-terminal section; belongs to the class I-like SAM-binding methyltransferase superfamily. Cation-independent O-methyltransferase family. As to quaternary structure, homodimer. A divalent metal cation serves as cofactor. Widely expressed. In adult, highly expressed in pancreas, placenta, fibroblast, thymus, prostate, testis, ovary and colon. Expressed at lower levels in spleen, small intestine and leukocytes. In fetus, expressed at high levels in the lung and kidney and at lower level in brain and liver.

The enzyme catalyses dTTP + H2O = dTMP + diphosphate + H(+). The catalysed reaction is UTP + H2O = UMP + diphosphate + H(+). It catalyses the reaction CTP + H2O = CMP + diphosphate + H(+). It carries out the reaction psi-UTP + H2O = psi-UMP + diphosphate + H(+). The enzyme catalyses 5-methyl-UTP + H2O = 5-methyl-UMP + diphosphate + H(+). The catalysed reaction is 5-methyl-CTP + H2O = 5-methyl-CMP + diphosphate + H(+). Its function is as follows. Nucleoside triphosphate pyrophosphatase that hydrolyzes dTTP and UTP. Can also hydrolyze CTP and the modified nucleotides pseudo-UTP, 5-methyl-UTP (m(5)UTP) and 5-methyl-CTP (m(5)CTP). Has weak activity with dCTP, 8-oxo-GTP and N(4)-methyl-dCTP. May have a dual role in cell division arrest and in preventing the incorporation of modified nucleotides into cellular nucleic acids. In addition, the presence of the putative catalytic domain of S-adenosyl-L-methionine binding in the C-terminal region argues for a methyltransferase activity. The protein is Probable bifunctional dTTP/UTP pyrophosphatase/methyltransferase protein (ASMTL) of Homo sapiens (Human).